Consider the following 266-residue polypeptide: Killer cell lectin-like receptor 6 (266 aa).

Residues 1–44 (MSEPEVTYSTVRLHKSSRLQKLVRHEETQGPREAGYRKCSVCWQ) lie on the Cytoplasmic side of the membrane. A helical; Signal-anchor for type II membrane protein transmembrane segment spans residues 45-66 (LIVKALGILCFLLLITVAVLAV). The Extracellular segment spans residues 67-266 (KIFQYGQHNQ…CGKKLDKFPH (200 aa)). 2 N-linked (GlcNAc...) asparagine glycosylation sites follow: Asn87 and Asn104. One can recognise a C-type lectin domain in the interval 143 to 261 (GVKYWFCYRT…SHYCICGKKL (119 aa)). 4 cysteine pairs are disulfide-bonded: Cys149-Cys154, Cys167-Cys255, Cys171-Cys257, and Cys236-Cys249.

Homodimer; disulfide-linked.

It is found in the membrane. In terms of biological role, receptor on natural killer (NK) cells for class I MHC. The polypeptide is Killer cell lectin-like receptor 6 (Klra6) (Mus musculus (Mouse)).